Reading from the N-terminus, the 108-residue chain is FK506-binding protein 1 (108 aa).

Positions 20-108 constitute a PPIase FKBP-type domain; that stretch reads GDNVTIHYVG…KFEVELLKVN (89 aa).

Belongs to the FKBP-type PPIase family. FKBP1 subfamily.

It localises to the cytoplasm. It carries out the reaction [protein]-peptidylproline (omega=180) = [protein]-peptidylproline (omega=0). Inhibited by both FK506 and rapamycin. Functionally, PPIases accelerate the folding of proteins. It catalyzes the cis-trans isomerization of proline imidic peptide bonds in oligopeptides. This chain is FK506-binding protein 1 (FRR1), found in Cryptococcus neoformans var. grubii serotype A (strain H99 / ATCC 208821 / CBS 10515 / FGSC 9487) (Filobasidiella neoformans var. grubii).